Reading from the N-terminus, the 187-residue chain is Choriogonadotropin subunit beta variant 1 (187 aa).

The N-terminal stretch at Met-1–Ala-50 is a signal peptide. Disulfide bonds link Cys-59–Cys-107, Cys-73–Cys-122, Cys-76–Cys-160, Cys-84–Cys-138, Cys-88–Cys-140, and Cys-143–Cys-150. Residues Asn-63 and Asn-80 are each glycosylated (N-linked (GlcNAc...) asparagine). Positions Asp-161–Pro-187 are disordered. The span at Ala-173–Pro-187 shows a compositional bias: pro residues.

It belongs to the glycoprotein hormones subunit beta family. Expressed in placenta, testis and pituitary.

The protein localises to the secreted. The polypeptide is Choriogonadotropin subunit beta variant 1 (CGB1) (Homo sapiens (Human)).